A 438-amino-acid polypeptide reads, in one-letter code: MYAEETNNVTAIKDIRAREILDSRGNPTIEADVILADGTIGRAAAPSGASTGSREALELRDGDQSRYMGKGVKKAVANVNSQIRSALMDKDVTAQQAIDDAMIALDGTENKDNLGANAILAVSLAVAKAAAKSQSLPLHQYIADLRNQTSLTMPVPMMNIINGGEHADNTVDIQEFMIEPVGFSSFSEALRAGTEIFHSLKSVLKSQGLNTAVGDEGGFAPNLRSNEEAITVIMQAIEQVGYTAGKDIHLALDCAATEFYKDGKYVLAGEGNKSFDSQGFSDYLVGLARQYPIISIEDGLDESDWDGWKYLTEQIGDKVQLVGDDLFVTNPAILQEGIDKKIANAILIKFNQIGTLSETLDAIYLAKKNGYATVISHRSGETEDSTIADLAVGTAAGQIKTGSLCRSDRVAKYNQLLRIEQQVRASYRGREEFIGLRG.

Q174 serves as a coordination point for (2R)-2-phosphoglycerate. E216 acts as the Proton donor in catalysis. Residues D253, E297, and D324 each coordinate Mg(2+). Residues K349, R378, S379, and K400 each contribute to the (2R)-2-phosphoglycerate site. K349 (proton acceptor) is an active-site residue.

It belongs to the enolase family. Component of the RNA degradosome, a multiprotein complex involved in RNA processing and mRNA degradation. It depends on Mg(2+) as a cofactor.

Its subcellular location is the cytoplasm. It localises to the secreted. It is found in the cell surface. The enzyme catalyses (2R)-2-phosphoglycerate = phosphoenolpyruvate + H2O. Its pathway is carbohydrate degradation; glycolysis; pyruvate from D-glyceraldehyde 3-phosphate: step 4/5. Catalyzes the reversible conversion of 2-phosphoglycerate (2-PG) into phosphoenolpyruvate (PEP). It is essential for the degradation of carbohydrates via glycolysis. This Psychrobacter cryohalolentis (strain ATCC BAA-1226 / DSM 17306 / VKM B-2378 / K5) protein is Enolase.